The primary structure comprises 65 residues: Large ribosomal subunit protein bL31 (65 aa).

Residues C16, C18, C36, and C39 each contribute to the Zn(2+) site.

This sequence belongs to the bacterial ribosomal protein bL31 family. Type A subfamily. Part of the 50S ribosomal subunit. The cofactor is Zn(2+).

In terms of biological role, binds the 23S rRNA. This is Large ribosomal subunit protein bL31 from Brevibacillus brevis (strain 47 / JCM 6285 / NBRC 100599).